A 572-amino-acid polypeptide reads, in one-letter code: FAD-linked oxidoreductase patO (572 aa).

The first 23 residues, methionine 1–glycine 23, serve as a signal peptide directing secretion. Residues asparagine 48, asparagine 71, asparagine 126, asparagine 180, asparagine 309, asparagine 354, asparagine 381, asparagine 422, asparagine 446, and asparagine 481 are each glycosylated (N-linked (GlcNAc...) asparagine). The FAD-binding PCMH-type domain occupies cysteine 115 to aspartate 295.

It belongs to the oxygen-dependent FAD-linked oxidoreductase family. The cofactor is FAD.

Its subcellular location is the vacuole lumen. It participates in mycotoxin biosynthesis; patulin biosynthesis. Its function is as follows. FAD-linked oxidoreductase; part of the gene cluster that mediates the biosynthesis of patulin, an acetate-derived tetraketide mycotoxin produced by several fungal species that shows antimicrobial properties against several bacteria. PatO acts with patJ in the vacuole to convert gentisyl alcohol to isoepoxydon. The pathway begins with the synthesis of 6-methylsalicylic acid by the polyketide synthase (PKS) patK via condensation of acetate and malonate units. The 6-methylsalicylic acid decarboxylase patG then catalyzes the decarboxylation of 6-methylsalicylic acid to yield m-cresol (also known as 3-methylphenol). These first reactions occur in the cytosol. The intermediate m-cresol is then transported into the endoplasmic reticulum where the cytochrome P450 monooxygenase patH converts it to m-hydroxybenzyl alcohol, which is further converted to gentisyl alcohol by the cytochrome P450 monooxygenase patI. The oxidoreductases patJ and patO further convert gentisyl alcohol to isoepoxydon in the vacuole. PatN catalyzes then the transformation of isoepoxydon into phyllostine. The cluster protein patF is responsible for the conversion from phyllostine to neopatulin whereas the alcohol dehydrogenase patD converts neopatulin to E-ascladiol. The steps between isoepoxydon and E-ascladiol occur in the cytosol, and E-ascladiol is probably secreted to the extracellular space by one of the cluster-specific transporters patC or patM. Finally, the secreted patulin synthase patE catalyzes the conversion of E-ascladiol to patulin. The polypeptide is FAD-linked oxidoreductase patO (Aspergillus clavatus (strain ATCC 1007 / CBS 513.65 / DSM 816 / NCTC 3887 / NRRL 1 / QM 1276 / 107)).